The sequence spans 764 residues: Protein FAR1-RELATED SEQUENCE 7 (764 aa).

Residues 42–118 form the FAR1 1 domain; the sequence is DYYNSYATRT…QKEHNHDLGG (77 aa). The interval 119-144 is disordered; that stretch reads HIEEAQTTPRPSVQQRAPAPTKLGIS. The span at 123-133 shows a compositional bias: polar residues; it reads AQTTPRPSVQQ. One can recognise an FAR1 2 domain in the interval 204–280; the sequence is QFYQAYAEVV…NKDHNHDLEP (77 aa). Residues 375 to 471 enclose the MULE domain; sequence AVVFDTSYRK…SAWQIRSKER (97 aa). The segment at 650–686 adopts an SWIM-type zinc-finger fold; the sequence is HAVTFSASNLNASCSCQMFEYEGLLCRHILKVFNLLD.

It belongs to the FHY3/FAR1 family. Expressed in hypocotyls, rosette and cauline leaves, inflorescences stems, flowers and siliques.

It is found in the nucleus. Putative transcription activator involved in regulating light control of development. This chain is Protein FAR1-RELATED SEQUENCE 7 (FRS7), found in Arabidopsis thaliana (Mouse-ear cress).